The primary structure comprises 417 residues: NADH-quinone oxidoreductase subunit D 1 (417 aa).

The protein belongs to the complex I 49 kDa subunit family. NDH-1 is composed of 14 different subunits. Subunits NuoB, C, D, E, F, and G constitute the peripheral sector of the complex.

The protein resides in the cell membrane. It carries out the reaction a quinone + NADH + 5 H(+)(in) = a quinol + NAD(+) + 4 H(+)(out). In terms of biological role, NDH-1 shuttles electrons from NADH, via FMN and iron-sulfur (Fe-S) centers, to quinones in the respiratory chain. The immediate electron acceptor for the enzyme in this species is believed to be ubiquinone. Couples the redox reaction to proton translocation (for every two electrons transferred, four hydrogen ions are translocated across the cytoplasmic membrane), and thus conserves the redox energy in a proton gradient. This Roseiflexus castenholzii (strain DSM 13941 / HLO8) protein is NADH-quinone oxidoreductase subunit D 1.